The following is a 25-amino-acid chain: Unknown protein 7 (25 aa).

Residues 1 to 25 (MENGKVHVASMSGLSMPHMNEMLEK) are disordered.

The chain is Unknown protein 7 from Pseudotsuga menziesii (Douglas-fir).